Here is a 290-residue protein sequence, read N- to C-terminus: Nitrogenase iron protein 2 (290 aa).

Gly10–Ser17 is an ATP binding site. Cys98 provides a ligand contact to [4Fe-4S] cluster. Arg101 bears the ADP-ribosylarginine; by dinitrogenase reductase ADP-ribosyltransferase mark. Position 133 (Cys133) interacts with [4Fe-4S] cluster.

The protein belongs to the NifH/BchL/ChlL family. As to quaternary structure, homodimer. [4Fe-4S] cluster serves as cofactor. The reversible ADP-ribosylation of Arg-101 inactivates the nitrogenase reductase and regulates nitrogenase activity.

The catalysed reaction is N2 + 8 reduced [2Fe-2S]-[ferredoxin] + 16 ATP + 16 H2O = H2 + 8 oxidized [2Fe-2S]-[ferredoxin] + 2 NH4(+) + 16 ADP + 16 phosphate + 6 H(+). In terms of biological role, the key enzymatic reactions in nitrogen fixation are catalyzed by the nitrogenase complex, which has 2 components: the iron protein (component 2) and a component 1 which is either a molybdenum-iron protein, a vanadium-iron, or an iron-iron protein. The protein is Nitrogenase iron protein 2 (vnfH) of Azotobacter chroococcum mcd 1.